Reading from the N-terminus, the 89-residue chain is Small ribosomal subunit protein uS15 (89 aa).

The protein belongs to the universal ribosomal protein uS15 family. Part of the 30S ribosomal subunit. Forms a bridge to the 50S subunit in the 70S ribosome, contacting the 23S rRNA.

Its function is as follows. One of the primary rRNA binding proteins, it binds directly to 16S rRNA where it helps nucleate assembly of the platform of the 30S subunit by binding and bridging several RNA helices of the 16S rRNA. In terms of biological role, forms an intersubunit bridge (bridge B4) with the 23S rRNA of the 50S subunit in the ribosome. The sequence is that of Small ribosomal subunit protein uS15 from Lactiplantibacillus plantarum (strain ATCC BAA-793 / NCIMB 8826 / WCFS1) (Lactobacillus plantarum).